The sequence spans 435 residues: Light-independent protochlorophyllide reductase subunit N (435 aa).

[4Fe-4S] cluster-binding residues include Cys23, Cys48, and Cys108.

This sequence belongs to the BchN/ChlN family. In terms of assembly, protochlorophyllide reductase is composed of three subunits; ChlL, ChlN and ChlB. Forms a heterotetramer of two ChlB and two ChlN subunits. [4Fe-4S] cluster is required as a cofactor.

It localises to the plastid. The protein resides in the chloroplast. The enzyme catalyses chlorophyllide a + oxidized 2[4Fe-4S]-[ferredoxin] + 2 ADP + 2 phosphate = protochlorophyllide a + reduced 2[4Fe-4S]-[ferredoxin] + 2 ATP + 2 H2O. It functions in the pathway porphyrin-containing compound metabolism; chlorophyll biosynthesis (light-independent). Component of the dark-operative protochlorophyllide reductase (DPOR) that uses Mg-ATP and reduced ferredoxin to reduce ring D of protochlorophyllide (Pchlide) to form chlorophyllide a (Chlide). This reaction is light-independent. The NB-protein (ChlN-ChlB) is the catalytic component of the complex. This chain is Light-independent protochlorophyllide reductase subunit N, found in Auxenochlorella protothecoides (Green microalga).